The chain runs to 290 residues: Glycine--tRNA ligase alpha subunit (290 aa).

This sequence belongs to the class-II aminoacyl-tRNA synthetase family. Tetramer of two alpha and two beta subunits.

The protein resides in the cytoplasm. The catalysed reaction is tRNA(Gly) + glycine + ATP = glycyl-tRNA(Gly) + AMP + diphosphate. This is Glycine--tRNA ligase alpha subunit from Maridesulfovibrio salexigens (strain ATCC 14822 / DSM 2638 / NCIMB 8403 / VKM B-1763) (Desulfovibrio salexigens).